A 290-amino-acid polypeptide reads, in one-letter code: NAD kinase (290 aa).

The active-site Proton acceptor is the aspartate 72. NAD(+) contacts are provided by residues 72-73 (DG), lysine 77, 145-146 (NE), aspartate 175, 186-191 (TAYSLS), and alanine 210.

Belongs to the NAD kinase family. The cofactor is a divalent metal cation.

The protein localises to the cytoplasm. The catalysed reaction is NAD(+) + ATP = ADP + NADP(+) + H(+). Involved in the regulation of the intracellular balance of NAD and NADP, and is a key enzyme in the biosynthesis of NADP. Catalyzes specifically the phosphorylation on 2'-hydroxyl of the adenosine moiety of NAD to yield NADP. This is NAD kinase from Bacteroides fragilis (strain YCH46).